Reading from the N-terminus, the 224-residue chain is Mannose-specific lectin 3 (224 aa).

2 consecutive Bulb-type lectin domains span residues N2 to A111 and R117 to T222. Disulfide bonds link C30–C52 and C145–C170.

As to quaternary structure, heterotetramer of 2 domain 1 and 2 domain 2 chains arranged as a dimer of domain 1/domain 2 heterodimers.

Mannose-specific lectin. Has weak agglutinating activity towards trypsin-treated erythrocytes from rabbit but not from human. The polypeptide is Mannose-specific lectin 3 (Crocus vernus (Dutch crocus)).